The following is a 108-amino-acid chain: uncharacterized protein (108 aa).

3 helical membrane passes run 10–32 (SLCY…FVVN), 45–67 (ISHI…GAVA), and 77–99 (FVII…WNVI).

The protein localises to the cell membrane. This is an uncharacterized protein from Bacillus subtilis (strain 168).